Reading from the N-terminus, the 68-residue chain is Conotoxin Cal12.1p1 (68 aa).

A propeptide spanning residues 1 to 23 (DLITNSYTRGKPRHVTSWRNLRT) is cleaved from the precursor.

Contains 4 disulfide bonds. In terms of tissue distribution, expressed by the venom duct.

It localises to the secreted. In Californiconus californicus (California cone), this protein is Conotoxin Cal12.1p1.